Consider the following 510-residue polypeptide: MKEFQRYIELDRSWQHNFFYPLIFQEYIYGFAYDPDLKKSILLENAGDKKYSLLIVKRLITRMYQQQNHLILFANHSNQNDFWGHKHTNNLYYQIISEVFAFIVEIPFSLLLISSLESKKRKIVKSHNLRSIHSIFPFFEDKFLHLNYVLEILIPYPIHLEILVQTLRYWMKDASSLHLLRFFLYEYRNWNSLITSQKSISIFSKRNKRLFLFLYNFHVCEYESIFVFFCNQSSHLRSTSFGVLLERIYFYGKLEYLVKVFPFTKDFRLILWLFKEPFPHYVRYRGKSILASKGTSLLMHKWKYYLINFWQCYFSLWSQPTRIYINQLSKHSLDFMGFFSSVQLNSSVVRSQMVENSFLIENTMKKFDTIVRIIPLVGSLAKANFCNVLGHPISKSVWTDLLDSDIIDRFGCICRNLSHYYSGSSRKKTLYRIKYILRLSCARTLARKHKSTVRAFLKRLGSEFLEEFFTEEEKVLSLILPRDSSIARGFYRGPIWYLDIICIHDLANDE.

This sequence belongs to the intron maturase 2 family. MatK subfamily.

It localises to the plastid. Its subcellular location is the chloroplast. Usually encoded in the trnK tRNA gene intron. Probably assists in splicing its own and other chloroplast group II introns. The chain is Maturase K from Grahamia bracteata.